The following is a 147-amino-acid chain: uncharacterized protein (147 aa).

2 helical membrane passes run 41–61 and 67–87; these read LANF…ALLI and LLAA…SFPL.

It localises to the cell membrane. This is an uncharacterized protein from Pyrococcus horikoshii (strain ATCC 700860 / DSM 12428 / JCM 9974 / NBRC 100139 / OT-3).